Here is a 264-residue protein sequence, read N- to C-terminus: 3-methyl-2-oxobutanoate hydroxymethyltransferase (264 aa).

2 residues coordinate Mg(2+): Asp-45 and Asp-84. 3-methyl-2-oxobutanoate is bound by residues 45–46 (DS), Asp-84, and Lys-112. Glu-114 lines the Mg(2+) pocket. Glu-181 serves as the catalytic Proton acceptor.

This sequence belongs to the PanB family. Homodecamer; pentamer of dimers. Mg(2+) is required as a cofactor.

It localises to the cytoplasm. It carries out the reaction 3-methyl-2-oxobutanoate + (6R)-5,10-methylene-5,6,7,8-tetrahydrofolate + H2O = 2-dehydropantoate + (6S)-5,6,7,8-tetrahydrofolate. It participates in cofactor biosynthesis; (R)-pantothenate biosynthesis; (R)-pantoate from 3-methyl-2-oxobutanoate: step 1/2. Its function is as follows. Catalyzes the reversible reaction in which hydroxymethyl group from 5,10-methylenetetrahydrofolate is transferred onto alpha-ketoisovalerate to form ketopantoate. The protein is 3-methyl-2-oxobutanoate hydroxymethyltransferase of Escherichia coli O7:K1 (strain IAI39 / ExPEC).